Consider the following 246-residue polypeptide: NH(3)-dependent NAD(+) synthetase (246 aa).

An ATP-binding site is contributed by Gly-29–Ser-36. Mg(2+) is bound at residue Asp-35. Deamido-NAD(+) is bound at residue Arg-110. Thr-130 contacts ATP. Glu-135 contacts Mg(2+). Lys-159 and Ser-181 together coordinate ATP.

Belongs to the NAD synthetase family. In terms of assembly, homodimer.

It carries out the reaction deamido-NAD(+) + NH4(+) + ATP = AMP + diphosphate + NAD(+) + H(+). It functions in the pathway cofactor biosynthesis; NAD(+) biosynthesis; NAD(+) from deamido-NAD(+) (ammonia route): step 1/1. Functionally, catalyzes the ATP-dependent amidation of deamido-NAD to form NAD. Uses ammonia as a nitrogen source. This Campylobacter jejuni subsp. doylei (strain ATCC BAA-1458 / RM4099 / 269.97) protein is NH(3)-dependent NAD(+) synthetase.